We begin with the raw amino-acid sequence, 116 residues long: UPF0134 protein MPN_038 (116 aa).

This sequence belongs to the UPF0134 family.

In Mycoplasma pneumoniae (strain ATCC 29342 / M129 / Subtype 1) (Mycoplasmoides pneumoniae), this protein is UPF0134 protein MPN_038.